Consider the following 349-residue polypeptide: Probable ethanolamine kinase A (349 aa).

It belongs to the choline/ethanolamine kinase family.

It localises to the cytoplasm. The catalysed reaction is ethanolamine + ATP = phosphoethanolamine + ADP + H(+). It functions in the pathway phospholipid metabolism; phosphatidylethanolamine biosynthesis; phosphatidylethanolamine from ethanolamine: step 1/3. Its function is as follows. Highly specific for ethanolamine phosphorylation. May be a rate-controlling step in phosphatidylethanolamine biosynthesis. This Dictyostelium discoideum (Social amoeba) protein is Probable ethanolamine kinase A (etnkA).